We begin with the raw amino-acid sequence, 145 residues long: D-aminoacyl-tRNA deacylase (145 aa).

The Gly-cisPro motif, important for rejection of L-amino acids motif lies at 137–138; that stretch reads GP.

The protein belongs to the DTD family. As to quaternary structure, homodimer.

It is found in the cytoplasm. It catalyses the reaction glycyl-tRNA(Ala) + H2O = tRNA(Ala) + glycine + H(+). The catalysed reaction is a D-aminoacyl-tRNA + H2O = a tRNA + a D-alpha-amino acid + H(+). An aminoacyl-tRNA editing enzyme that deacylates mischarged D-aminoacyl-tRNAs. Also deacylates mischarged glycyl-tRNA(Ala), protecting cells against glycine mischarging by AlaRS. Acts via tRNA-based rather than protein-based catalysis; rejects L-amino acids rather than detecting D-amino acids in the active site. By recycling D-aminoacyl-tRNA to D-amino acids and free tRNA molecules, this enzyme counteracts the toxicity associated with the formation of D-aminoacyl-tRNA entities in vivo and helps enforce protein L-homochirality. The polypeptide is D-aminoacyl-tRNA deacylase (Limosilactobacillus fermentum (strain NBRC 3956 / LMG 18251) (Lactobacillus fermentum)).